A 325-amino-acid chain; its full sequence is Pyruvate dehydrogenase E1 component subunit beta (325 aa).

Residue glutamate 59 coordinates thiamine diphosphate.

Heterodimer of an alpha and a beta chain. It depends on thiamine diphosphate as a cofactor.

The enzyme catalyses N(6)-[(R)-lipoyl]-L-lysyl-[protein] + pyruvate + H(+) = N(6)-[(R)-S(8)-acetyldihydrolipoyl]-L-lysyl-[protein] + CO2. The pyruvate dehydrogenase complex catalyzes the overall conversion of pyruvate to acetyl-CoA and CO(2). It contains multiple copies of three enzymatic components: pyruvate dehydrogenase (E1), dihydrolipoamide acetyltransferase (E2) and lipoamide dehydrogenase (E3). The polypeptide is Pyruvate dehydrogenase E1 component subunit beta (pdhB) (Rickettsia bellii (strain RML369-C)).